We begin with the raw amino-acid sequence, 534 residues long: CTP synthase (534 aa).

The tract at residues 1–265 (MKYIIVTGGV…TTQLMKHLQL (265 aa)) is amidoligase domain. Position 12 (Ser12) interacts with CTP. Ser12 is a UTP binding site. 13–18 (GLGKGI) is a binding site for ATP. Tyr53 contacts L-glutamine. Asp70 is an ATP binding site. Mg(2+) contacts are provided by Asp70 and Glu140. Residues 147-149 (DIE), 186-191 (KTKPSQ), and Lys222 each bind CTP. UTP contacts are provided by residues 186–191 (KTKPSQ) and Lys222. Residues 289-530 (KLAIVGKYTN…VAAMCKYRKE (242 aa)) enclose the Glutamine amidotransferase type-1 domain. Residue Gly352 coordinates L-glutamine. Residue Cys379 is the Nucleophile; for glutamine hydrolysis of the active site. L-glutamine is bound by residues 380 to 383 (LGMQ), Glu403, and Arg460. Residues His503 and Glu505 contribute to the active site.

This sequence belongs to the CTP synthase family. Homotetramer.

It catalyses the reaction UTP + L-glutamine + ATP + H2O = CTP + L-glutamate + ADP + phosphate + 2 H(+). The catalysed reaction is L-glutamine + H2O = L-glutamate + NH4(+). It carries out the reaction UTP + NH4(+) + ATP = CTP + ADP + phosphate + 2 H(+). It participates in pyrimidine metabolism; CTP biosynthesis via de novo pathway; CTP from UDP: step 2/2. Its activity is regulated as follows. Allosterically activated by GTP, when glutamine is the substrate; GTP has no effect on the reaction when ammonia is the substrate. The allosteric effector GTP functions by stabilizing the protein conformation that binds the tetrahedral intermediate(s) formed during glutamine hydrolysis. Inhibited by the product CTP, via allosteric rather than competitive inhibition. In terms of biological role, catalyzes the ATP-dependent amination of UTP to CTP with either L-glutamine or ammonia as the source of nitrogen. Regulates intracellular CTP levels through interactions with the four ribonucleotide triphosphates. The protein is CTP synthase of Methanosarcina barkeri (strain Fusaro / DSM 804).